Consider the following 252-residue polypeptide: U2 small nuclear ribonucleoprotein A' (252 aa).

3 LRR repeats span residues 41–62 (PHDAIDFTDNDIQVLGNFPLSP), 63–84 (RIRTLLLARNRIAQIQSTLPNA), and 87–108 (NLKNLVLASNNIGELADLEVLG). Residues 121-159 (NPVTKKENYRYWVLWLCPQVRFLDYVKVKDAERQKAKEL) form the LRRCT domain.

It belongs to the U2 small nuclear ribonucleoprotein A family. Associated with the spliceosome.

The protein resides in the nucleus. Involved in pre-mRNA splicing. The polypeptide is U2 small nuclear ribonucleoprotein A' (lea-1) (Neurospora crassa (strain ATCC 24698 / 74-OR23-1A / CBS 708.71 / DSM 1257 / FGSC 987)).